Consider the following 148-residue polypeptide: Lysozyme C-2 (148 aa).

The first 18 residues, 1–18 (MKTLLTLGLLLLSVTAQA), serve as a signal peptide directing secretion. Residues 19–148 (KVYERCEFAR…LSQYIRNCGV (130 aa)) enclose the C-type lysozyme domain. 4 disulfides stabilise this stretch: C24-C146, C48-C134, C83-C99, and C95-C113. Active-site residues include E53 and D71.

This sequence belongs to the glycosyl hydrolase 22 family. As to quaternary structure, monomer. Expressed weakly in myeloblasts, moderately in immature macrophages, and strongly in both mature macrophages and macrophage-rich tissues.

The protein resides in the secreted. It catalyses the reaction Hydrolysis of (1-&gt;4)-beta-linkages between N-acetylmuramic acid and N-acetyl-D-glucosamine residues in a peptidoglycan and between N-acetyl-D-glucosamine residues in chitodextrins.. Functionally, lysozymes have primarily a bacteriolytic function; those in tissues and body fluids are associated with the monocyte-macrophage system and enhance the activity of immunoagents. Lyz2 is active against a range of Gram-positive and Gram-negative bacteria. More effective than Lyz1 in killing Gram-negative bacteria. Lyz1 and Lyz2 are equally effective in killing Gram-positive bacteria. The protein is Lysozyme C-2 (Lyz2) of Mus musculus (Mouse).